The chain runs to 405 residues: Acetylornithine aminotransferase 1 (405 aa).

Pyridoxal 5'-phosphate is bound by residues 103–104 and F136; that span reads GA. R139 serves as a coordination point for N(2)-acetyl-L-ornithine. 221-224 contacts pyridoxal 5'-phosphate; the sequence is DEVQ. Residue K250 is modified to N6-(pyridoxal phosphate)lysine. S278 contacts N(2)-acetyl-L-ornithine. Residue T279 coordinates pyridoxal 5'-phosphate.

This sequence belongs to the class-III pyridoxal-phosphate-dependent aminotransferase family. ArgD subfamily. As to quaternary structure, homodimer. Pyridoxal 5'-phosphate is required as a cofactor.

Its subcellular location is the cytoplasm. The enzyme catalyses N(2)-acetyl-L-ornithine + 2-oxoglutarate = N-acetyl-L-glutamate 5-semialdehyde + L-glutamate. The protein operates within amino-acid biosynthesis; L-arginine biosynthesis; N(2)-acetyl-L-ornithine from L-glutamate: step 4/4. In Bradyrhizobium diazoefficiens (strain JCM 10833 / BCRC 13528 / IAM 13628 / NBRC 14792 / USDA 110), this protein is Acetylornithine aminotransferase 1.